The primary structure comprises 1035 residues: GRB10-interacting GYF protein 1 (1035 aa).

4 positions are modified to phosphoserine: Ser-24, Ser-28, Ser-137, and Ser-157. The segment at 105-422 (KGAGPPLAGT…AGPPGDLEDD (318 aa)) is disordered. Basic and acidic residues-rich tracts occupy residues 148 to 179 (SPREIQRSQSWDDRGERRFEKSARRDGARCGF) and 186 to 203 (PRKEHARSDSENWRSLRE). At Ser-230 the chain carries Phosphoserine. Residues 239–267 (GWREHGERRRKFEFDLRGDRGGCGEEEGR) show a composition bias toward basic and acidic residues. Acidic residues-rich tracts occupy residues 295 to 304 (CLDDEDEEMG) and 324 to 349 (PEEQELDFQGLEEEEEPSEGLEEEGP). The residue at position 341 (Ser-341) is a Phosphoserine. Residues 367 to 378 (SSPSPLPTLGPL) show a composition bias toward low complexity. Over residues 388–401 (TAEKEPPAAEDDIR) the composition is skewed to basic and acidic residues. Ser-406 bears the Phosphoserine mark. Residues 406–417 (SPGVGSSAGPPG) show a composition bias toward low complexity. Residues 474 to 522 (ARKWFYKDPQGEIQGPFTTQEMAEWFQAGYFSMSLLVKRGCDEGFQPLG) form the GYF domain. Residues Ser-538 and Ser-638 each carry the phosphoserine modification. Disordered regions lie at residues 621-640 (PPRGGDQNLLPTMSRSLSVP), 696-724 (KREEEERKRREEKRRQQQQEEQKRRQEEE), and 825-879 (WGGP…RPIR). The span at 629-639 (LLPTMSRSLSV) shows a compositional bias: polar residues. The segment covering 696 to 722 (KREEEERKRREEKRRQQQQEEQKRRQE) has biased composition (basic and acidic residues). The segment covering 857–874 (LKNSRSSPSLSDSYSHLS) has biased composition (low complexity). Residue Ser-862 is modified to Phosphoserine.

Belongs to the GIGYF family. Interacts with GRB10. This transient binding is increased under IGF1 stimulation and leads to recruitment of GIGYF1/GRB10 complex to IGF1 receptor. Interacts with DDX6.

In terms of biological role, may act cooperatively with GRB10 to regulate tyrosine kinase receptor signaling. May increase IGF1 receptor phosphorylation under IGF1 stimulation as well as phosphorylation of IRS1 and SHC1. This is GRB10-interacting GYF protein 1 (GIGYF1) from Homo sapiens (Human).